The following is a 583-amino-acid chain: 5-aminolevulinate synthase, erythroid-specific, mitochondrial (583 aa).

Arg-158 contacts succinyl-CoA. Residues Cys-253 and Phe-254 each contribute to the pyridoxal 5'-phosphate site. Positions 275 and 294 each coordinate succinyl-CoA. Pyridoxal 5'-phosphate-binding residues include Ser-327, His-355, and Thr-383. The active site involves Lys-386. An N6-(pyridoxal phosphate)lysine modification is found at Lys-386. 2 residues coordinate pyridoxal 5'-phosphate: Thr-415 and Thr-416. A succinyl-CoA-binding site is contributed by Thr-503.

This sequence belongs to the class-II pyridoxal-phosphate-dependent aminotransferase family. Homodimer. Pyridoxal 5'-phosphate is required as a cofactor.

Its subcellular location is the mitochondrion inner membrane. The enzyme catalyses succinyl-CoA + glycine + H(+) = 5-aminolevulinate + CO2 + CoA. It functions in the pathway porphyrin-containing compound metabolism; protoporphyrin-IX biosynthesis; 5-aminolevulinate from glycine: step 1/1. Catalyzes the pyridoxal 5'-phosphate (PLP)-dependent condensation of succinyl-CoA and glycine to form aminolevulinic acid (ALA), with CoA and CO2 as by-products. Contributes significantly to heme formation during erythropoiesis. This is 5-aminolevulinate synthase, erythroid-specific, mitochondrial (alas2) from Danio rerio (Zebrafish).